A 467-amino-acid chain; its full sequence is H(+)/Cl(-) exchange transporter ClcA (467 aa).

Topologically, residues 1–30 are cytoplasmic; the sequence is MTKRERIIQSVLVKVPKDAINQFLSHGSTP. A helical transmembrane segment spans residues 31–67; that stretch reads ISVLFLAALVGVLAGLVGTYFEIAVHFVSETRTEWLK. Over 68–74 the chain is Periplasmic; it reads SEIGHLL. A helical membrane pass occupies residues 75–98; that stretch reads PLWLAAILISAALAFVGYFLVHRF. The short motif at 104 to 108 is the Selectivity filter part_1 element; sequence GSGIP. A chloride-binding site is contributed by serine 105. Positions 107-114 form an intramembrane region, helical; that stretch reads IPEIEGAM. At 115–121 the chain is on the cytoplasmic side; sequence DNIRPVR. 2 helical membrane-spanning segments follow: residues 122 to 139 and 146 to 164; these read WWRV…ALGS and EGPT…TDIF. A Selectivity filter part_2 motif is present at residues 144-148; that stretch reads GREGP. The Cytoplasmic segment spans residues 165–174; that stretch reads RVKDDDTRHS. Intramembrane regions (helical) lie at residues 175–187 and 191–199; these read LLAS…LAAA and PLAGIMFVV. The Cytoplasmic segment spans residues 200-212; that stretch reads EEMRPQFRYSLIS. A helical transmembrane segment spans residues 213–230; the sequence is IRAVIISAVMANIVFRAI. At 231–250 the chain is on the periplasmic side; the sequence is NGQDAVITMPQYQPPELKAL. The chain crosses the membrane as a helical span at residues 251–279; the sequence is WLFLLLGGLFGVFGVLFNKLVTVAQDAFV. Over 280 to 285 the chain is Cytoplasmic; it reads ALHKND. Residues 286 to 307 traverse the membrane as a helical segment; sequence RKRYLITGTCLGGIFGLLLLYV. The Periplasmic segment spans residues 308–327; that stretch reads PELTGGGIHLIPDVTNGNYS. 2 helical membrane passes run 328–347 and 353–374; these read VSLL…ICFG and GIFA…ATAK. A Selectivity filter part_3 motif is present at residues 353-357; that stretch reads GIFAP. 2 residues coordinate chloride: isoleucine 354 and phenylalanine 355. Residues 375–384 are Periplasmic-facing; it reads ILLPDLPIEP. An intramembrane region (helical) is located at residues 385-399; sequence GMFAIAGMGALFAAT. The note=Loop between two helices intramembrane region spans 400 to 402; that stretch reads VRA. Residues 403-414 constitute an intramembrane region (helical); sequence PITGILLVIEMT. An intramembrane region (note=Loop between two helices) is located at residues 415 to 419; it reads NNYYL. Residues 420 to 436 traverse the membrane as a helical segment; that stretch reads ILPLIITSLGAVICAQI. The Cytoplasmic portion of the chain corresponds to 437–467; sequence CGGKPIYSQLLHRTIKNDKLRQQDLPEQQNS. Tyrosine 443 contributes to the chloride binding site.

The protein belongs to the chloride channel (TC 2.A.49) family. ClcA subfamily. Homodimer.

Its subcellular location is the cell inner membrane. It carries out the reaction 2 chloride(in) + H(+)(out) = 2 chloride(out) + H(+)(in). Proton-coupled chloride transporter. Functions as antiport system and exchanges two chloride ions for 1 proton. Probably acts as an electrical shunt for an outwardly-directed proton pump that is linked to amino acid decarboxylation, as part of the extreme acid resistance (XAR) response. This is H(+)/Cl(-) exchange transporter ClcA from Vibrio vulnificus (strain CMCP6).